A 471-amino-acid chain; its full sequence is Putative multidrug resistance protein MdtD (471 aa).

At 1–11 the chain is on the periplasmic side; it reads MTDLPDSTRWQ. A helical membrane pass occupies residues 12–32; that stretch reads LWIVAFGFFMQSLDTTIVNTA. Residues 33–48 lie on the Cytoplasmic side of the membrane; sequence LPSMAQSLGESPLHMH. The helical transmembrane segment at 49–69 threads the bilayer; the sequence is MVIVSYVLTVAVMLPASGWLA. Residues 70 to 76 are Periplasmic-facing; that stretch reads DKVGVRN. The helical transmembrane segment at 77–97 threads the bilayer; the sequence is IFFTAIVLFTLGSLFCALSGT. Over 98 to 101 the chain is Cytoplasmic; sequence LNEL. The chain crosses the membrane as a helical span at residues 102 to 124; the sequence is LLARALQGVGGAMMVPVGRLTVM. Residues 125 to 137 lie on the Periplasmic side of the membrane; it reads KIVPREQYMAAMT. Residues 138-158 form a helical membrane-spanning segment; sequence FVTLPGQVGPLLGPALGGLLV. The Cytoplasmic segment spans residues 159 to 164; that stretch reads EYASWH. The helical transmembrane segment at 165 to 185 threads the bilayer; the sequence is WIFLINIPVGIIGAIATLMLM. The Periplasmic segment spans residues 186-196; the sequence is PNYTMQTRRFD. A helical membrane pass occupies residues 197 to 217; it reads LSGFLLLAVGMAVLTLALDGS. Topologically, residues 218–224 are cytoplasmic; the sequence is KGTGLSP. Residues 225–245 form a helical membrane-spanning segment; sequence LAIAGLVAVGVVALVLYLLHA. Over 246-262 the chain is Periplasmic; that stretch reads RNNNRALFSLKLFRTRT. The chain crosses the membrane as a helical span at residues 263 to 283; that stretch reads FSLGLAGSFAGRIGSGMLPFM. The Cytoplasmic segment spans residues 284–285; the sequence is TP. The helical transmembrane segment at 286–306 threads the bilayer; sequence VFLQIGLGFSPFHAGLMMIPM. The Periplasmic segment spans residues 307 to 341; sequence VLGSMGMKRIVVQVVNRFGYRRVLVATTLGLSLVT. The helical transmembrane segment at 342–362 threads the bilayer; that stretch reads LLFMTTALLGWYYVLPFVLFL. The Cytoplasmic segment spans residues 363 to 395; it reads QGMVNSTRFSSMNTLTLKDLPDNLASSGNSLLS. Residues 396–416 form a helical membrane-spanning segment; it reads MIMQLSMSIGVTIAGLLLGLF. The Periplasmic portion of the chain corresponds to 417 to 430; sequence GSQHISVDSGTTQT. Residues 431–451 form a helical membrane-spanning segment; it reads VFMYTWLSMAFIIALPAFIFA. At 452–471 the chain is on the cytoplasmic side; sequence RVPNDTHQNVAISRRKRSAQ.

The protein belongs to the major facilitator superfamily. TCR/Tet family.

It localises to the cell inner membrane. The chain is Putative multidrug resistance protein MdtD from Shigella flexneri.